The chain runs to 572 residues: Sulfate adenylyltransferase (572 aa).

The interval 1–169 (MANAPHGGVL…IEAVNKLNHY (169 aa)) is N-terminal. A catalytic region spans residues 170–393 (DYVALRYTPA…LRESNPPRAT (224 aa)). Sulfate is bound at residue Gln197. ATP is bound by residues 197–200 (QTRN) and 291–294 (GRDH). Catalysis depends on residues Thr198, Arg199, and Asn200. Arg199 lines the sulfate pocket. Ala295 lines the sulfate pocket. Val333 contributes to the ATP binding site. Residues 394-572 (QGFTIFLTGY…LESQGFLERQ (179 aa)) form an allosteric regulation domain; adenylyl-sulfate kinase-like region. Residues 433–436 (DTVR), Arg450, 476–477 (IA), and Arg514 each bind 3'-phosphoadenylyl sulfate.

It in the N-terminal section; belongs to the sulfate adenylyltransferase family. This sequence in the C-terminal section; belongs to the APS kinase family. As to quaternary structure, homohexamer. Dimer of trimers.

Its subcellular location is the cytoplasm. The catalysed reaction is sulfate + ATP + H(+) = adenosine 5'-phosphosulfate + diphosphate. It functions in the pathway sulfur metabolism; hydrogen sulfide biosynthesis; sulfite from sulfate: step 1/3. Its activity is regulated as follows. Allosterically inhibited by 3'-phosphoadenosine 5'-phosphosulfate (PAPS). In terms of biological role, catalyzes the first intracellular reaction of sulfate assimilation, forming adenosine-5'-phosphosulfate (APS) from inorganic sulfate and ATP. Plays an important role in sulfate activation as a component of the biosynthesis pathway of sulfur-containing amino acids. The chain is Sulfate adenylyltransferase from Penicillium chrysogenum (Penicillium notatum).